Here is a 215-residue protein sequence, read N- to C-terminus: Imidazole glycerol phosphate synthase subunit HisH (215 aa).

The Glutamine amidotransferase type-1 domain maps to 7 to 215 (TIAVIDYGMG…LLKNFVEWQP (209 aa)). Catalysis depends on Cys-86, which acts as the Nucleophile. Active-site residues include His-195 and Glu-197.

In terms of assembly, heterodimer of HisH and HisF.

It is found in the cytoplasm. The enzyme catalyses 5-[(5-phospho-1-deoxy-D-ribulos-1-ylimino)methylamino]-1-(5-phospho-beta-D-ribosyl)imidazole-4-carboxamide + L-glutamine = D-erythro-1-(imidazol-4-yl)glycerol 3-phosphate + 5-amino-1-(5-phospho-beta-D-ribosyl)imidazole-4-carboxamide + L-glutamate + H(+). The catalysed reaction is L-glutamine + H2O = L-glutamate + NH4(+). It functions in the pathway amino-acid biosynthesis; L-histidine biosynthesis; L-histidine from 5-phospho-alpha-D-ribose 1-diphosphate: step 5/9. IGPS catalyzes the conversion of PRFAR and glutamine to IGP, AICAR and glutamate. The HisH subunit catalyzes the hydrolysis of glutamine to glutamate and ammonia as part of the synthesis of IGP and AICAR. The resulting ammonia molecule is channeled to the active site of HisF. This chain is Imidazole glycerol phosphate synthase subunit HisH, found in Dechloromonas aromatica (strain RCB).